We begin with the raw amino-acid sequence, 88 residues long: Acyl-CoA-binding domain-containing protein 7 (88 aa).

Residues 3–88 (LQADFDKAAK…AKELIEKYGI (86 aa)) form the ACB domain. Residues Arg15, 30-34 (YGLYK), Lys56, and Tyr75 each bind an acyl-CoA.

It belongs to the ACBD7 family.

In terms of biological role, binds medium- and long-chain acyl-CoA esters. The sequence is that of Acyl-CoA-binding domain-containing protein 7 (ACBD7) from Bos taurus (Bovine).